Reading from the N-terminus, the 221-residue chain is Phosphoribosylformylglycinamidine synthase subunit PurQ (221 aa).

The region spanning 5 to 221 is the Glutamine amidotransferase type-1 domain; that stretch reads TVGIVVFPGS…LYTLRSLITQ (217 aa). C89 acts as the Nucleophile in catalysis. Catalysis depends on residues H197 and E199.

Part of the FGAM synthase complex composed of 1 PurL, 1 PurQ and 2 PurS subunits.

Its subcellular location is the cytoplasm. The catalysed reaction is N(2)-formyl-N(1)-(5-phospho-beta-D-ribosyl)glycinamide + L-glutamine + ATP + H2O = 2-formamido-N(1)-(5-O-phospho-beta-D-ribosyl)acetamidine + L-glutamate + ADP + phosphate + H(+). It carries out the reaction L-glutamine + H2O = L-glutamate + NH4(+). Its pathway is purine metabolism; IMP biosynthesis via de novo pathway; 5-amino-1-(5-phospho-D-ribosyl)imidazole from N(2)-formyl-N(1)-(5-phospho-D-ribosyl)glycinamide: step 1/2. Its function is as follows. Part of the phosphoribosylformylglycinamidine synthase complex involved in the purines biosynthetic pathway. Catalyzes the ATP-dependent conversion of formylglycinamide ribonucleotide (FGAR) and glutamine to yield formylglycinamidine ribonucleotide (FGAM) and glutamate. The FGAM synthase complex is composed of three subunits. PurQ produces an ammonia molecule by converting glutamine to glutamate. PurL transfers the ammonia molecule to FGAR to form FGAM in an ATP-dependent manner. PurS interacts with PurQ and PurL and is thought to assist in the transfer of the ammonia molecule from PurQ to PurL. The polypeptide is Phosphoribosylformylglycinamidine synthase subunit PurQ (Prochlorococcus marinus subsp. pastoris (strain CCMP1986 / NIES-2087 / MED4)).